A 100-amino-acid chain; its full sequence is Aspartyl/glutamyl-tRNA(Asn/Gln) amidotransferase subunit C (100 aa).

Belongs to the GatC family. Heterotrimer of A, B and C subunits.

The catalysed reaction is L-glutamyl-tRNA(Gln) + L-glutamine + ATP + H2O = L-glutaminyl-tRNA(Gln) + L-glutamate + ADP + phosphate + H(+). It carries out the reaction L-aspartyl-tRNA(Asn) + L-glutamine + ATP + H2O = L-asparaginyl-tRNA(Asn) + L-glutamate + ADP + phosphate + 2 H(+). Functionally, allows the formation of correctly charged Asn-tRNA(Asn) or Gln-tRNA(Gln) through the transamidation of misacylated Asp-tRNA(Asn) or Glu-tRNA(Gln) in organisms which lack either or both of asparaginyl-tRNA or glutaminyl-tRNA synthetases. The reaction takes place in the presence of glutamine and ATP through an activated phospho-Asp-tRNA(Asn) or phospho-Glu-tRNA(Gln). This is Aspartyl/glutamyl-tRNA(Asn/Gln) amidotransferase subunit C from Streptococcus pneumoniae serotype 19F (strain G54).